A 452-amino-acid polypeptide reads, in one-letter code: GPI mannosyltransferase 2 (452 aa).

Over 1-7 (MMEKVTK) the chain is Cytoplasmic. The helical transmembrane segment at 8-28 (LALTSRVMVLVVQLLANFATP) threads the bilayer. Residues 29–113 (DHKPDVFRMP…HLGIPLSRDA (85 aa)) lie on the Lumenal side of the membrane. Residues 114–134 (LILLVAVALNVLIFCKTANVL) traverse the membrane as a helical segment. Over 135–161 (YKLTQRMFNDHNKSWNAALIFCFNPAS) the chain is Cytoplasmic. A helical membrane pass occupies residues 162–182 (IFFSAAYSETFFAFASFSLML). At 183–209 (ECMRSEKDFRTFRLGAALTGCFVCRSN) the chain is on the lumenal side. The chain crosses the membrane as a helical span at residues 210 to 230 (GLLTLGFPLYFLARHILLSTG). Over 231-238 (SVQRCWQL) the chain is Cytoplasmic. A helical membrane pass occupies residues 239 to 259 (FKMGLAMLVALGILHTYYFYI). Residues 260–284 (YRLYCLPDVKVQHAQHVVDYAKERS) are Lumenal-facing. The chain crosses the membrane as a helical span at residues 285–305 (FLISGQASVGSPWCGYTLPFP). Topologically, residues 306–327 (YTYVQSHYWDVGFLRYYKWKQL) are cytoplasmic. The chain crosses the membrane as a helical span at residues 328–348 (PNFLLALPMLLFMHWHCYDYI). At 349–370 (RKLVANTWSKISPSEYQGILKE) the chain is on the lumenal side. The helical transmembrane segment at 371–391 (HISFPFVLHAAVLTLVCTLYV) threads the bilayer. The Cytoplasmic segment spans residues 392 to 398 (HIQVSTR). Residues 399-419 (LLASATPVFYWFAADYMPNTF) form a helical membrane-spanning segment. At 420-426 (QLSFRSK) the chain is on the lumenal side. A helical membrane pass occupies residues 427–447 (AGVLFIWCLTYSLVGTVLFSN). Over 448-452 (NYPWT) the chain is Cytoplasmic.

This sequence belongs to the PIGV family.

The protein resides in the endoplasmic reticulum membrane. The protein operates within glycolipid biosynthesis; glycosylphosphatidylinositol-anchor biosynthesis. In terms of biological role, mannosyltransferase involved in glycosylphosphatidylinositol-anchor biosynthesis. Transfers the second mannose to the glycosylphosphatidylinositol during GPI precursor assembly. Required for the GPI-mediated endoplasmic reticulum exit and proper targeting to the cell surface of chp. Required for GPI-mediated membrane attachment of chp, qsm and Cont. Essential for microvillar stability in the rhabdomere. The chain is GPI mannosyltransferase 2 from Drosophila pseudoobscura pseudoobscura (Fruit fly).